The primary structure comprises 474 residues: tRNA-2-methylthio-N(6)-dimethylallyladenosine synthase (474 aa).

Positions 3 to 120 (KKLHIKTWGC…LPEMIEQVRR (118 aa)) constitute an MTTase N-terminal domain. Positions 12, 49, 83, 157, 161, and 164 each coordinate [4Fe-4S] cluster. The region spanning 143–375 (RAEGPTAFVS…QDRITQQAMR (233 aa)) is the Radical SAM core domain. Positions 378 to 441 (RHMMGTVQRI…TNSLRGKFIR (64 aa)) constitute a TRAM domain.

The protein belongs to the methylthiotransferase family. MiaB subfamily. Monomer. Requires [4Fe-4S] cluster as cofactor.

It localises to the cytoplasm. The enzyme catalyses N(6)-dimethylallyladenosine(37) in tRNA + (sulfur carrier)-SH + AH2 + 2 S-adenosyl-L-methionine = 2-methylsulfanyl-N(6)-dimethylallyladenosine(37) in tRNA + (sulfur carrier)-H + 5'-deoxyadenosine + L-methionine + A + S-adenosyl-L-homocysteine + 2 H(+). Catalyzes the methylthiolation of N6-(dimethylallyl)adenosine (i(6)A), leading to the formation of 2-methylthio-N6-(dimethylallyl)adenosine (ms(2)i(6)A) at position 37 in tRNAs that read codons beginning with uridine. The chain is tRNA-2-methylthio-N(6)-dimethylallyladenosine synthase from Shewanella oneidensis (strain ATCC 700550 / JCM 31522 / CIP 106686 / LMG 19005 / NCIMB 14063 / MR-1).